We begin with the raw amino-acid sequence, 131 residues long: Large-conductance mechanosensitive channel (131 aa).

3 consecutive transmembrane segments (helical) span residues 8 to 28 (FAIR…GAFG), 30 to 50 (IVSS…LGGI), and 67 to 87 (GAFI…FLFV).

The protein belongs to the MscL family. Homopentamer.

Its subcellular location is the cell membrane. Channel that opens in response to stretch forces in the membrane lipid bilayer. May participate in the regulation of osmotic pressure changes within the cell. The chain is Large-conductance mechanosensitive channel from Geobacillus kaustophilus (strain HTA426).